A 300-amino-acid chain; its full sequence is MQANSQFKTVALVGRSNTPGIGEPLTALATCIEKLGFEIAFEAETAQEIGVSRWPALQPAEIGARADVAIVLGGDGTMLGIGRQLAPYKTPLIGINHGRLGFITDIPFSDMREIIPQMLSGSFEREERSLLESRIMRDGQPIYHALAFNDVVVNRSGFSGMAELRVSVDGRFMYNQRSDGLIVATPTGSTAYALSSQGPILHPQLQGLVLVPIAPHALSNRPIVIPDDSKVSIQIISGRDVNVNFDMQSFTALELNDTIDVRRSRHTVPFLHPVGYSYYATLRKKLHWNEYPSHEDDPDD.

Asp75 acts as the Proton acceptor in catalysis. Residues 75-76 (DG), 149-150 (ND), Arg177, Asp179, 190-195 (TAYALS), Ala214, and Gln248 each bind NAD(+).

It belongs to the NAD kinase family. Requires a divalent metal cation as cofactor.

Its subcellular location is the cytoplasm. It catalyses the reaction NAD(+) + ATP = ADP + NADP(+) + H(+). In terms of biological role, involved in the regulation of the intracellular balance of NAD and NADP, and is a key enzyme in the biosynthesis of NADP. Catalyzes specifically the phosphorylation on 2'-hydroxyl of the adenosine moiety of NAD to yield NADP. The sequence is that of NAD kinase from Paraburkholderia phymatum (strain DSM 17167 / CIP 108236 / LMG 21445 / STM815) (Burkholderia phymatum).